The primary structure comprises 213 residues: ATP phosphoribosyltransferase (213 aa).

This sequence belongs to the ATP phosphoribosyltransferase family. Short subfamily. As to quaternary structure, heteromultimer composed of HisG and HisZ subunits.

The protein resides in the cytoplasm. The catalysed reaction is 1-(5-phospho-beta-D-ribosyl)-ATP + diphosphate = 5-phospho-alpha-D-ribose 1-diphosphate + ATP. The protein operates within amino-acid biosynthesis; L-histidine biosynthesis; L-histidine from 5-phospho-alpha-D-ribose 1-diphosphate: step 1/9. In terms of biological role, catalyzes the condensation of ATP and 5-phosphoribose 1-diphosphate to form N'-(5'-phosphoribosyl)-ATP (PR-ATP). Has a crucial role in the pathway because the rate of histidine biosynthesis seems to be controlled primarily by regulation of HisG enzymatic activity. The chain is ATP phosphoribosyltransferase from Anoxybacillus flavithermus (strain DSM 21510 / WK1).